The sequence spans 273 residues: MGRRACCAKEGVKRGAWTSKEDDALAAYVKAHGEGKWREVPQKAGLRRCGKSCRLRWLNYLRPNIRRGNISYDEEDLIIRLHRLLGNRWSLIAGRLPGRTDNEIKNYWNSTLGRRAGAGAGAGGSWVVVAPDTGSHATPAATSGACETGQNSAAHRADPDSAGTTTTSAAAVWAPKAVRCTGGLFFFHRDTTPAHAGETATPMAGGGGGGGGEAGSSDDCSSAASVSLRVGSHDEPCFSGDGDGDWMDDVRALASFLESDEDWLRCQTAGQLA.

HTH myb-type domains are found at residues 9–65 and 66–116; these read KEGV…RPNI and RRGN…GRRA. 2 consecutive DNA-binding regions (H-T-H motif) follow at residues 37–61 and 89–112; these read WREVPQKAGLRRCGKSCRLRWLNYL and WSLIAGRLPGRTDNEIKNYWNSTL. 2 disordered regions span residues 137-164 and 196-220; these read ATPAATSGACETGQNSAAHRADPDSAGT and AGETATPMAGGGGGGGGEAGSSDDC. A compositionally biased stretch (gly residues) spans 204–214; that stretch reads AGGGGGGGGEA.

The protein localises to the nucleus. Functionally, controls the expression of genes involved in anthocyanin biosynthesis. Regulates the expression of at least 3 structural genes: chalcone synthase, dihydroflavonol reductase and flavonol O(3) glucosyltransferase. C1 acts as a trans-acting factor. This is Anthocyanin regulatory C1 protein (C1) from Zea mays (Maize).